We begin with the raw amino-acid sequence, 178 residues long: CDP-diacylglycerol--glycerol-3-phosphate 3-phosphatidyltransferase (178 aa).

The next 4 membrane-spanning stretches (helical) occupy residues 28–48 (LSSL…GFFA), 88–108 (LIFF…IFLI), 125–145 (LFVS…VNFL), and 147–167 (ILTN…WVDY).

Belongs to the CDP-alcohol phosphatidyltransferase class-I family.

Its subcellular location is the cell membrane. It catalyses the reaction a CDP-1,2-diacyl-sn-glycerol + sn-glycerol 3-phosphate = a 1,2-diacyl-sn-glycero-3-phospho-(1'-sn-glycero-3'-phosphate) + CMP + H(+). Its pathway is phospholipid metabolism; phosphatidylglycerol biosynthesis; phosphatidylglycerol from CDP-diacylglycerol: step 1/2. In terms of biological role, this protein catalyzes the committed step to the synthesis of the acidic phospholipids. This chain is CDP-diacylglycerol--glycerol-3-phosphate 3-phosphatidyltransferase (pgsA), found in Aquifex aeolicus (strain VF5).